Consider the following 102-residue polypeptide: Small ribosomal subunit protein uS10 (102 aa).

Belongs to the universal ribosomal protein uS10 family. Part of the 30S ribosomal subunit.

In terms of biological role, involved in the binding of tRNA to the ribosomes. The polypeptide is Small ribosomal subunit protein uS10 (Leptospira borgpetersenii serovar Hardjo-bovis (strain JB197)).